The primary structure comprises 611 residues: MASRGARQRLKGSGASSGDTAPAADKLRELLGSREAGGAEHRTELSGNKAGQVWAPEGSTAFKCLLSARLCAALLSNISDCDETFNYWEPTHYLIYGEGFQTWEYSPAYAIRSYAYLLLHAWPAAFHARILQTNKILVFYFLRCLLAFVSCICELYFYKAVCKKFGLHVSRMMLAFLVLSTGMFCSSSAFLPSSFCMYTTLIAMTGWYMDKTSIAVLGVAAGAILGWPFSAALGLPIAFDLLVMKHRWKSFFHWSLMALILFLVPVVVIDSYYYGKLVIAPLNIVLYNVFTPHGPDLYGTEPWYFYLINGFLNFNVAFALALLVLPLTSLMEYLLQRFHVQNLGHPYWLTLAPMYIWFIIFFIQPHKEERFLFPVYPLICLCGAVALSALQKCYHFVFQRYRLEHYTVTSNWLALGTVFLFGLLSFSRSVALFRGYHGPLDLYPEFYRIATDPTIHTVPEGRPVNVCVGKEWYRFPSSFLLPDNWQLQFIPSEFRGQLPKPFAEGPLATRIVPTDMNDQNLEEPSRYIDISKCHYLVDLDTMRETPREPKYSSNKEEWISLAYRPFLDASRSSKLLRAFYVPFLSDQYTVYVNYTILKPRKAKQIRKKSGG.

Over residues 1 to 10 (MASRGARQRL) the composition is skewed to basic residues. The tract at residues 1-23 (MASRGARQRLKGSGASSGDTAPA) is disordered. The Lumenal portion of the chain corresponds to 1-135 (MASRGARQRL…FHARILQTNK (135 aa)). Asn-77 carries N-linked (GlcNAc...) asparagine glycosylation. Residues 136–156 (ILVFYFLRCLLAFVSCICELY) traverse the membrane as a helical segment. Topologically, residues 157 to 171 (FYKAVCKKFGLHVSR) are cytoplasmic. A helical membrane pass occupies residues 172–192 (MMLAFLVLSTGMFCSSSAFLP). Over 193 to 213 (SSFCMYTTLIAMTGWYMDKTS) the chain is Lumenal. Residues 214–234 (IAVLGVAAGAILGWPFSAALG) traverse the membrane as a helical segment. Residues 235 to 249 (LPIAFDLLVMKHRWK) are Cytoplasmic-facing. The helical transmembrane segment at 250–270 (SFFHWSLMALILFLVPVVVID) threads the bilayer. Topologically, residues 271 to 304 (SYYYGKLVIAPLNIVLYNVFTPHGPDLYGTEPWY) are lumenal. The helical transmembrane segment at 305–325 (FYLINGFLNFNVAFALALLVL) threads the bilayer. Residues 326–342 (PLTSLMEYLLQRFHVQN) are Cytoplasmic-facing. Residues 343–363 (LGHPYWLTLAPMYIWFIIFFI) form a helical membrane-spanning segment. At 364–370 (QPHKEER) the chain is on the lumenal side. Residues 371–391 (FLFPVYPLICLCGAVALSALQ) form a helical membrane-spanning segment. Over 392-405 (KCYHFVFQRYRLEH) the chain is Cytoplasmic. Residues 406–426 (YTVTSNWLALGTVFLFGLLSF) traverse the membrane as a helical segment. Residues 427–611 (SRSVALFRGY…AKQIRKKSGG (185 aa)) lie on the Lumenal side of the membrane. Asn-593 is a glycosylation site (N-linked (GlcNAc...) asparagine).

This sequence belongs to the glycosyltransferase 22 family. In terms of tissue distribution, ubiquitously expressed; with highest levels in heart, liver and pancreas.

It localises to the endoplasmic reticulum membrane. It carries out the reaction an alpha-D-Man-(1-&gt;2)-alpha-D-Man-(1-&gt;2)-alpha-D-Man-(1-&gt;3)-[alpha-D-Man-(1-&gt;3)-alpha-D-Man-(1-&gt;6)]-beta-D-Man-(1-&gt;4)-beta-D-GlcNAc-(1-&gt;4)-alpha-D-GlcNAc-diphospho-di-trans,poly-cis-dolichol + a di-trans,poly-cis-dolichyl beta-D-mannosyl phosphate = an alpha-D-Man-(1-&gt;2)-alpha-D-Man-(1-&gt;2)-alpha-D-Man-(1-&gt;3)-[alpha-D-Man-(1-&gt;2)-alpha-D-Man-(1-&gt;3)-alpha-D-Man-(1-&gt;6)]-beta-D-Man-(1-&gt;4)-beta-D-GlcNAc-(1-&gt;4)-alpha-D-GlcNAc-diphospho-di-trans,poly-cis-dolichol + a di-trans,poly-cis-dolichyl phosphate + H(+). The catalysed reaction is an alpha-D-Man-(1-&gt;2)-alpha-D-Man-(1-&gt;2)-alpha-D-Man-(1-&gt;3)-[alpha-D-Man-(1-&gt;2)-alpha-D-Man-(1-&gt;3)-[alpha-D-Man-(1-&gt;6)]-alpha-D-Man-(1-&gt;6)]-beta-D-Man-(1-&gt;4)-beta-D-GlcNAc-(1-&gt;4)-alpha-D-GlcNAc-diphospho-di-trans,poly-cis-dolichol + a di-trans,poly-cis-dolichyl beta-D-mannosyl phosphate = an alpha-D-Man-(1-&gt;2)-alpha-D-Man-(1-&gt;2)-alpha-D-Man-(1-&gt;3)-[alpha-D-Man-(1-&gt;2)-alpha-D-Man-(1-&gt;3)-[alpha-D-Man-(1-&gt;2)-alpha-D-Man-(1-&gt;6)]-alpha-D-Man-(1-&gt;6)]-beta-D-Man-(1-&gt;4)-beta-D-GlcNAc-(1-&gt;4)-alpha-D-GlcNAc-diphospho-di-trans,poly-cis-dolichol + a di-trans,poly-cis-dolichyl phosphate + H(+). Its pathway is protein modification; protein glycosylation. Mannosyltransferase that operates in the biosynthetic pathway of dolichol-linked oligosaccharides, the glycan precursors employed in protein asparagine (N)-glycosylation. The assembly of dolichol-linked oligosaccharides begins on the cytosolic side of the endoplasmic reticulum membrane and finishes in its lumen. The sequential addition of sugars to dolichol pyrophosphate produces dolichol-linked oligosaccharides containing fourteen sugars, including two GlcNAcs, nine mannoses and three glucoses. Once assembled, the oligosaccharide is transferred from the lipid to nascent proteins by oligosaccharyltransferases. In the lumen of the endoplasmic reticulum, catalyzes the addition of the seventh and ninth alpha-1,2-linked mannose residues to Man(6)GlcNAc(2)-PP-dolichol and Man(8)GlcNAc(2)-PP-dolichol respectively. The protein is Alpha-1,2-mannosyltransferase ALG9 of Homo sapiens (Human).